We begin with the raw amino-acid sequence, 229 residues long: UPF0228 protein MA_3119 (229 aa).

Residues 35–66 (STPVNTSTPVNTSTPVNTSTPVNTSTPVSTST) show a composition bias toward low complexity. The disordered stretch occupies residues 35–67 (STPVNTSTPVNTSTPVNTSTPVNTSTPVSTSTI).

This sequence belongs to the UPF0228 family.

The chain is UPF0228 protein MA_3119 from Methanosarcina acetivorans (strain ATCC 35395 / DSM 2834 / JCM 12185 / C2A).